A 237-amino-acid chain; its full sequence is Aliphatic sulfonates import ATP-binding protein SsuB 1 (237 aa).

Residues 5 to 221 (LMNIRVDRKA…PRDRRDPLLA (217 aa)) enclose the ABC transporter domain. An ATP-binding site is contributed by 38 to 45 (GPSGCGKS).

Belongs to the ABC transporter superfamily. Aliphatic sulfonates importer (TC 3.A.1.17.2) family. The complex is composed of two ATP-binding proteins (SsuB), two transmembrane proteins (SsuC) and a solute-binding protein (SsuA).

It localises to the cell inner membrane. The enzyme catalyses ATP + H2O + aliphatic sulfonate-[sulfonate-binding protein]Side 1 = ADP + phosphate + aliphatic sulfonateSide 2 + [sulfonate-binding protein]Side 1.. In terms of biological role, part of the ABC transporter complex SsuABC involved in aliphatic sulfonates import. Responsible for energy coupling to the transport system. In Pseudomonas savastanoi pv. phaseolicola (strain 1448A / Race 6) (Pseudomonas syringae pv. phaseolicola (strain 1448A / Race 6)), this protein is Aliphatic sulfonates import ATP-binding protein SsuB 1.